The chain runs to 637 residues: Acetolactate synthase 2, chloroplastic (637 aa).

Residues 1-73 constitute a chloroplast transit peptide; sequence MASFSFFGTI…SSKYAPNVPR (73 aa). A disordered region spans residues 35 to 69; the sequence is RRATRVSVSANSKKDQDRTASRRENPSTFSSKYAP. Basic and acidic residues predominate over residues 46 to 59; it reads SKKDQDRTASRREN. Glutamate 120 serves as a coordination point for thiamine diphosphate. FAD-binding positions include arginine 222, 329–350, and 372–391; these read HGTV…FGVR and DIDS…VCCD. The thiamine pyrophosphate binding stretch occupies residues 462–542; that stretch reads QHQMWAAQFY…VKVLLINNQH (81 aa). Aspartate 513 and asparagine 540 together coordinate Mg(2+).

It belongs to the TPP enzyme family. Mg(2+) serves as cofactor. It depends on thiamine diphosphate as a cofactor.

The protein resides in the plastid. It is found in the chloroplast. It carries out the reaction 2 pyruvate + H(+) = (2S)-2-acetolactate + CO2. It functions in the pathway amino-acid biosynthesis; L-isoleucine biosynthesis; L-isoleucine from 2-oxobutanoate: step 1/4. Its pathway is amino-acid biosynthesis; L-valine biosynthesis; L-valine from pyruvate: step 1/4. This chain is Acetolactate synthase 2, chloroplastic, found in Brassica napus (Rape).